Reading from the N-terminus, the 242-residue chain is Small ribosomal subunit protein eS1 (242 aa).

Belongs to the eukaryotic ribosomal protein eS1 family. As to quaternary structure, component of the small ribosomal subunit. Mature ribosomes consist of a small (40S) and a large (60S) subunit. The 40S subunit contains about 33 different proteins and 1 molecule of RNA (18S). The 60S subunit contains about 49 different proteins and 3 molecules of RNA (25S, 5.8S and 5S).

It is found in the cytoplasm. The chain is Small ribosomal subunit protein eS1 from Lodderomyces elongisporus (strain ATCC 11503 / CBS 2605 / JCM 1781 / NBRC 1676 / NRRL YB-4239) (Yeast).